The following is a 390-amino-acid chain: Chorismate synthase (390 aa).

The NADP(+) site is built by R48 and R54. FMN contacts are provided by residues R125 to S127, N238 to A239, G278, K293 to S297, and R319. The interval P359 to S390 is disordered.

This sequence belongs to the chorismate synthase family. In terms of assembly, homotetramer. FMNH2 serves as cofactor.

The catalysed reaction is 5-O-(1-carboxyvinyl)-3-phosphoshikimate = chorismate + phosphate. Its pathway is metabolic intermediate biosynthesis; chorismate biosynthesis; chorismate from D-erythrose 4-phosphate and phosphoenolpyruvate: step 7/7. Catalyzes the anti-1,4-elimination of the C-3 phosphate and the C-6 proR hydrogen from 5-enolpyruvylshikimate-3-phosphate (EPSP) to yield chorismate, which is the branch point compound that serves as the starting substrate for the three terminal pathways of aromatic amino acid biosynthesis. This reaction introduces a second double bond into the aromatic ring system. This Nitrosomonas europaea (strain ATCC 19718 / CIP 103999 / KCTC 2705 / NBRC 14298) protein is Chorismate synthase.